Here is a 1066-residue protein sequence, read N- to C-terminus: E3 ubiquitin-protein ligase PDZRN3 (1066 aa).

An RING-type; degenerate zinc finger spans residues 18 to 56 (CALCHKVLEDPLTTPCGHVFCAGCVLPWVVQEGSCPARC). Residues 100–158 (EHLERCDFAPARCRHAGCGQVLLRRDVEAHMRDACDARPVGRCQEGCGLPLTHGEQRAG) form a TRAF-type zinc finger. PDZ domains lie at 249 to 339 (TLVL…LRRT) and 419 to 503 (EVDL…IARP). Ser427 carries the phosphoserine modification. The disordered stretch occupies residues 545-603 (QKKHDEDGGTTDTATILSNQHEKDSGVGRTDESTRNDESSEQENNGDDATASSNPLAGQ). Over residues 554–563 (TTDTATILSN) the composition is skewed to polar residues. Residues 564–582 (QHEKDSGVGRTDESTRNDE) are compositionally biased toward basic and acidic residues. The segment covering 594–603 (TASSNPLAGQ) has biased composition (polar residues). Positions 679-704 (ESVDKELELLNEELRSIELECLSIVR) form a coiled coil. A compositionally biased stretch (basic and acidic residues) spans 744–754 (TELPEKSDKDS). 2 disordered regions span residues 744 to 778 (TELPEKSDKDSSSAYNTGESCRSTPLTLEISPDNS) and 808 to 863 (LLSI…LPSY). Composition is skewed to polar residues over residues 755 to 769 (SSAYNTGESCRSTPL) and 845 to 855 (GSRSPTPSQKL). A coiled-coil region spans residues 975–1025 (KEERKQHLVKAKEQRRRREFMMQSRLDCLKEQQAADDRKEMNILELSHKKM).

Interacts with NLGN1 and EFNB2. Interacts with UBE2D2 and with MUSK via the first PDZ domain. Post-translationally, auto-ubiquitinated. As to expression, widely expressed, including in the heart, skeletal muscle and liver and, at lower levels, in the brain, colon, small intestine, placenta and lung. Down-regulated in ovarian serous papillary tumors.

Its subcellular location is the synapse. It localises to the cytoplasm. The catalysed reaction is S-ubiquitinyl-[E2 ubiquitin-conjugating enzyme]-L-cysteine + [acceptor protein]-L-lysine = [E2 ubiquitin-conjugating enzyme]-L-cysteine + N(6)-ubiquitinyl-[acceptor protein]-L-lysine.. It participates in protein modification; protein ubiquitination. E3 ubiquitin-protein ligase. Plays an important role in regulating the surface level of MUSK on myotubes. Mediates the ubiquitination of MUSK, promoting its endocytosis and lysosomal degradation. Might contribute to terminal myogenic differentiation. This chain is E3 ubiquitin-protein ligase PDZRN3 (PDZRN3), found in Homo sapiens (Human).